The chain runs to 86 residues: YcgL domain-containing protein XOO0428 (86 aa).

Residues 1–83 (MHAYVYKSQR…PKTRVLAGEC (83 aa)) form the YcgL domain.

The polypeptide is YcgL domain-containing protein XOO0428 (Xanthomonas oryzae pv. oryzae (strain MAFF 311018)).